Here is a 403-residue protein sequence, read N- to C-terminus: Phosphopentomutase (403 aa).

Mn(2+) is bound by residues D13, D298, H303, D339, H340, and H351.

It belongs to the phosphopentomutase family. Mn(2+) is required as a cofactor.

It is found in the cytoplasm. The catalysed reaction is 2-deoxy-alpha-D-ribose 1-phosphate = 2-deoxy-D-ribose 5-phosphate. It catalyses the reaction alpha-D-ribose 1-phosphate = D-ribose 5-phosphate. It participates in carbohydrate degradation; 2-deoxy-D-ribose 1-phosphate degradation; D-glyceraldehyde 3-phosphate and acetaldehyde from 2-deoxy-alpha-D-ribose 1-phosphate: step 1/2. In terms of biological role, isomerase that catalyzes the conversion of deoxy-ribose 1-phosphate (dRib-1-P) and ribose 1-phosphate (Rib-1-P) to deoxy-ribose 5-phosphate (dRib-5-P) and ribose 5-phosphate (Rib-5-P), respectively. This is Phosphopentomutase from Streptococcus pneumoniae serotype 4 (strain ATCC BAA-334 / TIGR4).